The sequence spans 173 residues: S-ribosylhomocysteine lyase (173 aa).

Positions 54, 58, and 128 each coordinate Fe cation.

The protein belongs to the LuxS family. As to quaternary structure, homodimer. Fe cation is required as a cofactor.

The enzyme catalyses S-(5-deoxy-D-ribos-5-yl)-L-homocysteine = (S)-4,5-dihydroxypentane-2,3-dione + L-homocysteine. Functionally, involved in the synthesis of autoinducer 2 (AI-2) which is secreted by bacteria and is used to communicate both the cell density and the metabolic potential of the environment. The regulation of gene expression in response to changes in cell density is called quorum sensing. Catalyzes the transformation of S-ribosylhomocysteine (RHC) to homocysteine (HC) and 4,5-dihydroxy-2,3-pentadione (DPD). This chain is S-ribosylhomocysteine lyase, found in Hydrogenovibrio crunogenus (strain DSM 25203 / XCL-2) (Thiomicrospira crunogena).